Reading from the N-terminus, the 702-residue chain is Protein crooked neck (702 aa).

HAT repeat units follow at residues 56–88 (DYQQ…WEEQ), 90–122 (QEIQ…MEMK), 124–156 (KQVN…MEEM), 158–189 (ENVA…FELR), 191–222 (KEID…FEES), 224–259 (GFIH…FEEG), 261–295 (KEHD…HEKK), 305–337 (VIVS…LIEA), 339–373 (GDRD…LWIN), 383–419 (EDAE…FEIR), 454–486 (REFE…LENL), 488–522 (GDTD…FEVA), and 524–555 (GETE…FEMG). Residues 620–628 (PRRIKKRQK) carry the Nuclear localization signal motif. Residues 670-702 (KDNTVDDPPATAIASEPEPAADAAPADTTDSGD) form a disordered region. Over residues 683–702 (ASEPEPAADAAPADTTDSGD) the composition is skewed to low complexity.

Belongs to the crooked-neck family. In terms of assembly, colocalizes with a complex containing snRNP proteins. Transcribed in all cells during embryonic development.

Its subcellular location is the nucleus speckle. May be involved in pre-mRNA splicing process. Involved in embryonic neurogenesis and cell rearrangement during Malpighian tubule morphogenesis. The protein is Protein crooked neck (crn) of Drosophila melanogaster (Fruit fly).